The sequence spans 166 residues: Alanine racemase (166 aa).

Tyrosine 62 (proton acceptor; specific for L-alanine) is an active-site residue. Substrate is bound at residue methionine 110.

It belongs to the alanine racemase family. It depends on pyridoxal 5'-phosphate as a cofactor.

The enzyme catalyses L-alanine = D-alanine. Its pathway is amino-acid biosynthesis; D-alanine biosynthesis; D-alanine from L-alanine: step 1/1. Its function is as follows. Catalyzes the interconversion of L-alanine and D-alanine. May also act on other amino acids. This is Alanine racemase (alr) from Piscirickettsia salmonis.